We begin with the raw amino-acid sequence, 226 residues long: UPF0758 protein GWCH70_2550 (226 aa).

In terms of domain architecture, MPN spans 104 to 226 (VIRSPEDGAK…FVSLKEKGYV (123 aa)). Positions 175, 177, and 188 each coordinate Zn(2+). Positions 175–188 (HNHPSGDPTPSRED) match the JAMM motif motif.

It belongs to the UPF0758 family.

The protein is UPF0758 protein GWCH70_2550 of Geobacillus sp. (strain WCH70).